The chain runs to 657 residues: N-acetylgalactosaminyltransferase 7 (657 aa).

Over 1 to 6 (MRLKIG) the chain is Cytoplasmic. A helical; Signal-anchor for type II membrane protein membrane pass occupies residues 7-29 (FILRSLLVVGSFLGLVVLWSSLT). Topologically, residues 30-657 (PRPDDPSPLS…KWEMNNIHSV (628 aa)) are lumenal. Positions 31 to 66 (RPDDPSPLSRMREDRDVNDPMPNRGGNGLAPGEDRF) are disordered. Cystine bridges form between Cys197/Cys435, Cys426/Cys507, Cys545/Cys562, Cys585/Cys600, and Cys625/Cys640. The catalytic subdomain A stretch occupies residues 206 to 317 (LLTSSVVIVF…VNWYAPLVAP (112 aa)). Positions 247 and 277 each coordinate substrate. Mn(2+)-binding residues include Asp301 and His303. The interval 381–443 (PYRSPAMAGG…PCSRVGHIYR (63 aa)) is catalytic subdomain B. Trp412 provides a ligand contact to substrate. His440 contributes to the Mn(2+) binding site. A substrate-binding site is contributed by Arg443. The Ricin B-type lectin domain occupies 532-652 (VDWGEIRGFE…SKTTQKWEMN (121 aa)).

The protein belongs to the glycosyltransferase 2 family. GalNAc-T subfamily. Mn(2+) serves as cofactor.

Its subcellular location is the golgi apparatus membrane. The catalysed reaction is L-seryl-[protein] + UDP-N-acetyl-alpha-D-galactosamine = a 3-O-[N-acetyl-alpha-D-galactosaminyl]-L-seryl-[protein] + UDP + H(+). The enzyme catalyses L-threonyl-[protein] + UDP-N-acetyl-alpha-D-galactosamine = a 3-O-[N-acetyl-alpha-D-galactosaminyl]-L-threonyl-[protein] + UDP + H(+). Its pathway is protein modification; protein glycosylation. In terms of biological role, glycopeptide transferase involved in O-linked oligosaccharide biosynthesis, which catalyzes the transfer of an N-acetyl-D-galactosamine residue to an already glycosylated peptide. In contrast to other proteins of the family, it does not act as a peptide transferase that transfers GalNAc onto serine or threonine residue on the protein receptor, but instead requires the prior addition of a GalNAc on a peptide before adding additional GalNAc moieties. Some peptide transferase activity is however not excluded, considering that its appropriate peptide substrate may remain unidentified. The chain is N-acetylgalactosaminyltransferase 7 (GALNT7) from Pongo abelii (Sumatran orangutan).